Here is a 273-residue protein sequence, read N- to C-terminus: MILKGCLLYPLCSPRNKQRCARLWKIAYGGLLKIVTGSLLTFYVVLCLDGGMVLMRKQVPSRFMYPKEWQHLTMFILLTLNGCVDFMSKNVLPQRCVGLEKGTLVLIIYELLLLMVSHVKDSEGVELHVYSLLILVVFLLLLVLTAELWAPNMCHLQLMETFLILMMGSWLMQAGFILYRPVSGYPWQDDDISDIMFVTTFFCWHVMINASFLLGIYGFSSFWYHCFRPSLKLTGPKEAPYYASTPGPLYKLLQEVEQSEKEDQALLLPKSSP.

A run of 6 helical transmembrane segments spans residues 34–54, 72–92, 96–116, 129–149, 158–178, and 195–215; these read IVTG…GMVL, LTMF…KNVL, CVGL…LLMV, VYSL…AELW, LMET…GFIL, and IMFV…FLLG.

It belongs to the TMEM45 family.

It is found in the membrane. The sequence is that of Transmembrane epididymal protein 1 (TEDDM1) from Homo sapiens (Human).